Here is a 163-residue protein sequence, read N- to C-terminus: Large ribosomal subunit protein mL59 (163 aa).

The segment at 33–53 is disordered; that stretch reads PAGADPETHKTPYQEESPNPF.

This sequence belongs to the mitochondrion-specific ribosomal protein mL59 family. As to quaternary structure, component of the mitochondrial large ribosomal subunit (mt-LSU). Mature N.crassa 74S mitochondrial ribosomes consist of a small (37S) and a large (54S) subunit. The 37S small subunit contains a 16S ribosomal RNA (16S mt-rRNA) and 32 different proteins. The 54S large subunit contains a 23S rRNA (23S mt-rRNA) and 42 different proteins.

It localises to the mitochondrion. Its function is as follows. Component of the mitochondrial ribosome (mitoribosome), a dedicated translation machinery responsible for the synthesis of mitochondrial genome-encoded proteins, including at least some of the essential transmembrane subunits of the mitochondrial respiratory chain. The mitoribosomes are attached to the mitochondrial inner membrane and translation products are cotranslationally integrated into the membrane. This is Large ribosomal subunit protein mL59 (mrpl25) from Neurospora crassa (strain ATCC 24698 / 74-OR23-1A / CBS 708.71 / DSM 1257 / FGSC 987).